A 153-amino-acid polypeptide reads, in one-letter code: Small ribosomal subunit protein uS9 (153 aa).

A compositionally biased stretch (low complexity) spans 1–19 (MTAPADEAPAVEDAPVAED). Disordered stretches follow at residues 1–23 (MTAPADEAPAVEDAPVAEDIAPV) and 121–153 (LKKAGMLTRDSREKERKKYGLKKARKAPQYSKR). Residues 129–138 (RDSREKERKK) show a composition bias toward basic and acidic residues. Basic residues predominate over residues 139 to 153 (YGLKKARKAPQYSKR).

This sequence belongs to the universal ribosomal protein uS9 family.

The sequence is that of Small ribosomal subunit protein uS9 from Saccharopolyspora erythraea (strain ATCC 11635 / DSM 40517 / JCM 4748 / NBRC 13426 / NCIMB 8594 / NRRL 2338).